The following is a 451-amino-acid chain: UDP-N-acetylmuramate--L-alanine ligase (451 aa).

Position 110 to 116 (110 to 116 (GTHGKTT)) interacts with ATP.

It belongs to the MurCDEF family.

The protein resides in the cytoplasm. The enzyme catalyses UDP-N-acetyl-alpha-D-muramate + L-alanine + ATP = UDP-N-acetyl-alpha-D-muramoyl-L-alanine + ADP + phosphate + H(+). The protein operates within cell wall biogenesis; peptidoglycan biosynthesis. Functionally, cell wall formation. This is UDP-N-acetylmuramate--L-alanine ligase from Francisella tularensis subsp. novicida (strain U112).